The primary structure comprises 485 residues: Adenosylhomocysteinase (485 aa).

Substrate contacts are provided by threonine 64, aspartate 139, and glutamate 205. 206 to 208 (TTT) is a binding site for NAD(+). Substrate-binding residues include lysine 235 and aspartate 239. NAD(+) is bound by residues asparagine 240, 269 to 274 (GYGDVG), glutamate 292, asparagine 327, 348 to 350 (IGH), and asparagine 397.

This sequence belongs to the adenosylhomocysteinase family. NAD(+) is required as a cofactor.

It catalyses the reaction S-adenosyl-L-homocysteine + H2O = L-homocysteine + adenosine. Its pathway is amino-acid biosynthesis; L-homocysteine biosynthesis; L-homocysteine from S-adenosyl-L-homocysteine: step 1/1. Its function is as follows. Adenosylhomocysteine is a competitive inhibitor of S-adenosyl-L-methionine-dependent methyl transferase reactions; therefore adenosylhomocysteinase may play a key role in the control of methylations via regulation of the intracellular concentration of adenosylhomocysteine. The polypeptide is Adenosylhomocysteinase (SAHH) (Solanum lycopersicum (Tomato)).